The primary structure comprises 468 residues: E3 ubiquitin-protein ligase RGLG2 (468 aa).

The tract at residues 1–89 is disordered; sequence MGTGNSKENW…PSQSYGSDNK (89 aa). Gly2 carries the N-myristoyl glycine lipid modification. The span at 12 to 45 shows a compositional bias: low complexity; the sequence is QSSFRSTSASSASPSSSSWASQQSYPQYGAESYN. A compositionally biased stretch (pro residues) spans 46–65; sequence YPPPPSYAQPPEYTQPPPPL. The span at 66-84 shows a compositional bias: low complexity; that stretch reads YSTQPYSAPSYSAPPSQSY. One can recognise a VWFA domain in the interval 122–342; the sequence is NLIVGIDFTK…KETEFALSAL (221 aa). Residues 369–416 are disordered; it reads FPLPPPMRGGSSSYNSPKPSRLPSFKPSVPPHPTEGYHVRSSPVPPPT. An RING-type zinc finger spans residues 425-458; sequence CPICLSNPKDMAFGCGHQTCCECGPDLQMCPICR.

In terms of assembly, interacts with the heterodimer UBC35/UEV1B, UBC35 alone, PIN1, but not with UCB2, UCB9, UEV1B or UEV1C alone. Interacts with ERF053. Post-translationally, N-myristoylated. As to expression, ubiquitously expressed.

The protein resides in the cell membrane. It is found in the nucleus. It catalyses the reaction S-ubiquitinyl-[E2 ubiquitin-conjugating enzyme]-L-cysteine + [acceptor protein]-L-lysine = [E2 ubiquitin-conjugating enzyme]-L-cysteine + N(6)-ubiquitinyl-[acceptor protein]-L-lysine.. Its function is as follows. E3 ubiquitin-protein ligase that mediates the formation of 'Lys-63'-linked ubiquitin chains. Regulates apical dominance by acting on the auxin transport proteins abundance. Mediates ubiquitination and subsequent proteasomal degradation of ERF053 in response to drought stress. Acts as a negative regulator of drought stress response. In Arabidopsis thaliana (Mouse-ear cress), this protein is E3 ubiquitin-protein ligase RGLG2.